Consider the following 651-residue polypeptide: Beta-glucuronidase (651 aa).

Positions 1-22 (MLRGPAAVWAALGPLLWACGLA) are cleaved as a signal peptide. Asn172 and Asn419 each carry an N-linked (GlcNAc...) asparagine glycan. Glu450 functions as the Proton donor in the catalytic mechanism. A glycan (N-linked (GlcNAc...) asparagine) is linked at Asn630.

The protein belongs to the glycosyl hydrolase 2 family. As to quaternary structure, homotetramer.

The protein resides in the lysosome. It carries out the reaction a beta-D-glucuronoside + H2O = D-glucuronate + an alcohol. Inhibited by L-aspartic acid. Its function is as follows. Plays an important role in the degradation of dermatan and keratan sulfates. This is Beta-glucuronidase (GUSB) from Felis catus (Cat).